We begin with the raw amino-acid sequence, 271 residues long: MPELPEVETIRRAVGPQVRGKRIIHTNVRATKLRHPLPPELDRLLVGQLIVAMDRRGKYLLLRCKGGTIIFHLGMTGMLYLVKASSPHGKHDHLDLVLDGSYILRFTDPRRFGTIIWTDNDPLQHPLLVAHGPEPLEAEFSASYLYLKRHRRKIPIKQLIMDSRVVAGIGNIYANESLFRAGIAPQTSASDLSPDKDLLLVDAIKGVLTDAVEAGTSNIESALTGERPQGYFPYEFSIYGKKGRPCPKCGSAIRMMRLGGRSTFFCPLCQK.

Proline 2 serves as the catalytic Schiff-base intermediate with DNA. Residue glutamate 3 is the Proton donor of the active site. Lysine 58 serves as the catalytic Proton donor; for beta-elimination activity. Residues histidine 91, arginine 110, and arginine 152 each coordinate DNA. Residues 237–271 (SIYGKKGRPCPKCGSAIRMMRLGGRSTFFCPLCQK) form an FPG-type zinc finger. The active-site Proton donor; for delta-elimination activity is arginine 261.

The protein belongs to the FPG family. As to quaternary structure, monomer. The cofactor is Zn(2+).

It catalyses the reaction Hydrolysis of DNA containing ring-opened 7-methylguanine residues, releasing 2,6-diamino-4-hydroxy-5-(N-methyl)formamidopyrimidine.. The enzyme catalyses 2'-deoxyribonucleotide-(2'-deoxyribose 5'-phosphate)-2'-deoxyribonucleotide-DNA = a 3'-end 2'-deoxyribonucleotide-(2,3-dehydro-2,3-deoxyribose 5'-phosphate)-DNA + a 5'-end 5'-phospho-2'-deoxyribonucleoside-DNA + H(+). Involved in base excision repair of DNA damaged by oxidation or by mutagenic agents. Acts as a DNA glycosylase that recognizes and removes damaged bases. Has a preference for oxidized purines, such as 7,8-dihydro-8-oxoguanine (8-oxoG). Has AP (apurinic/apyrimidinic) lyase activity and introduces nicks in the DNA strand. Cleaves the DNA backbone by beta-delta elimination to generate a single-strand break at the site of the removed base with both 3'- and 5'-phosphates. The protein is Formamidopyrimidine-DNA glycosylase of Geotalea daltonii (strain DSM 22248 / JCM 15807 / FRC-32) (Geobacter daltonii).